The primary structure comprises 572 residues: Phosphoenolpyruvate-protein phosphotransferase (572 aa).

Histidine 191 (tele-phosphohistidine intermediate) is an active-site residue. Residues arginine 298 and arginine 334 each coordinate phosphoenolpyruvate. The Mg(2+) site is built by glutamate 433 and aspartate 457. Phosphoenolpyruvate is bound by residues 456 to 457 (ND) and arginine 467. Cysteine 504 (proton donor) is an active-site residue.

It belongs to the PEP-utilizing enzyme family. In terms of assembly, homodimer. Mg(2+) is required as a cofactor.

It is found in the cytoplasm. It catalyses the reaction L-histidyl-[protein] + phosphoenolpyruvate = N(pros)-phospho-L-histidyl-[protein] + pyruvate. Its function is as follows. General (non sugar-specific) component of the phosphoenolpyruvate-dependent sugar phosphotransferase system (sugar PTS). This major carbohydrate active-transport system catalyzes the phosphorylation of incoming sugar substrates concomitantly with their translocation across the cell membrane. Enzyme I transfers the phosphoryl group from phosphoenolpyruvate (PEP) to the phosphoryl carrier protein (HPr). The polypeptide is Phosphoenolpyruvate-protein phosphotransferase (ptsI) (Staphylococcus aureus (strain Mu50 / ATCC 700699)).